A 163-amino-acid chain; its full sequence is uncharacterized protein (163 aa).

It belongs to the IMPDH/GMPR family.

This is an uncharacterized protein from Haemophilus influenzae (strain ATCC 51907 / DSM 11121 / KW20 / Rd).